Reading from the N-terminus, the 448-residue chain is Phosphoglucosamine mutase (448 aa).

Ser102 (phosphoserine intermediate) is an active-site residue. Residues Ser102, Asp243, Asp245, and Asp247 each contribute to the Mg(2+) site. At Ser102 the chain carries Phosphoserine.

This sequence belongs to the phosphohexose mutase family. The cofactor is Mg(2+). Post-translationally, activated by phosphorylation.

It catalyses the reaction alpha-D-glucosamine 1-phosphate = D-glucosamine 6-phosphate. Its function is as follows. Catalyzes the conversion of glucosamine-6-phosphate to glucosamine-1-phosphate. This chain is Phosphoglucosamine mutase, found in Mycobacterium bovis (strain ATCC BAA-935 / AF2122/97).